Consider the following 238-residue polypeptide: U2 small nuclear ribonucleoprotein A' (238 aa).

LRR repeat units follow at residues 53-74 (PTHILDLTNNDLIMIPDLSRRD), 75-95 (DIHTLLLGRNNIVEVDGRLLP), and 97-118 (NVQNLTLSNNSIRRFEDLQRLR). The region spanning 132-170 (NQVCHLANYREHVLRLVPHLETLDFQNVTAEERKSAMSF) is the LRRCT domain. Residues 167 to 189 (AMSFPRQADGDTLGPVNTAIRDN) form a disordered region.

The protein belongs to the U2 small nuclear ribonucleoprotein A family. As to quaternary structure, belongs to the CWC complex (or CEF1-associated complex), a spliceosome sub-complex reminiscent of a late-stage spliceosome composed of the U2, U5 and U6 snRNAs and at least BUD13, BUD31, BRR2, CDC40, CEF1, CLF1, CUS1, CWC2, CWC15, CWC21, CWC22, CWC23, CWC24, CWC25, CWC27, ECM2, HSH155, IST3, ISY1, LEA1, MSL1, NTC20, PRP8, PRP9, PRP11, PRP19, PRP21, PRP22, PRP45, PRP46, SLU7, SMB1, SMD1, SMD2, SMD3, SMX2, SMX3, SNT309, SNU114, SPP2, SYF1, SYF2, RSE1 and YJU2. Interacts with MSL1.

Its subcellular location is the nucleus. Involved in pre-mRNA splicing. Associates to U2 snRNA in a MSL1 dependent manner and is required for normal accumulation of U2 snRNA. Required for the spliceosome assembly and the efficient addition of U2 snRNP onto the pre-mRNA. The polypeptide is U2 small nuclear ribonucleoprotein A' (LEA1) (Saccharomyces cerevisiae (strain ATCC 204508 / S288c) (Baker's yeast)).